The primary structure comprises 407 residues: GTPase Obg (407 aa).

An Obg domain is found at 1-159 (MKFVDEVSIR…RDLKLELKVL (159 aa)). Residues 127-149 (NTRFKSSTNRAPRQTTPGKPGDQ) are disordered. Residues 129-143 (RFKSSTNRAPRQTTP) are compositionally biased toward polar residues. The OBG-type G domain maps to 160–333 (ADVGLLGLPN…LTRDIMRYLE (174 aa)). Residues 166–173 (GLPNAGKS), 191–195 (FTTLV), 213–216 (DIPG), 283–286 (NKCD), and 314–316 (SAI) each bind GTP. Positions 173 and 193 each coordinate Mg(2+). The disordered stretch occupies residues 376–407 (SGVKSVHDIGDDDWDEEDVDDEDGPEIIYVRD). A compositionally biased stretch (acidic residues) spans 385-400 (GDDDWDEEDVDDEDGP).

It belongs to the TRAFAC class OBG-HflX-like GTPase superfamily. OBG GTPase family. As to quaternary structure, monomer. Mg(2+) serves as cofactor.

It is found in the cytoplasm. Its function is as follows. An essential GTPase which binds GTP, GDP and possibly (p)ppGpp with moderate affinity, with high nucleotide exchange rates and a fairly low GTP hydrolysis rate. Plays a role in control of the cell cycle, stress response, ribosome biogenesis and in those bacteria that undergo differentiation, in morphogenesis control. This chain is GTPase Obg, found in Pseudomonas savastanoi pv. phaseolicola (strain 1448A / Race 6) (Pseudomonas syringae pv. phaseolicola (strain 1448A / Race 6)).